A 109-amino-acid chain; its full sequence is Small ribosomal subunit protein uS17 (109 aa).

Belongs to the universal ribosomal protein uS17 family. In terms of assembly, part of the 30S ribosomal subunit.

Functionally, one of the primary rRNA binding proteins, it binds specifically to the 5'-end of 16S ribosomal RNA. In Methanococcus maripaludis (strain DSM 14266 / JCM 13030 / NBRC 101832 / S2 / LL), this protein is Small ribosomal subunit protein uS17.